Consider the following 284-residue polypeptide: MSQQYPQTNDVPYLFSNTSTAYHTVDICKVNTSLKDSVPRFWLIYIHGGGWSDPNIQANTFSQIRDELLKEKDILAHISGIAAVNYRLSGDPSEGRNARYPDHLDDVKRAIGFLDSRYGFEDRYIVVGHSAGATLAFQLAMEPETSSLPTPKKPLAILGASGIYDLRRLLNSIWHVVKYREEYVHMLEGAFGPGGFAYGEQSEGRCSSEWDLASPAKATSYGSSWCNAQLAMLVHSPDDELVPLEQSTQFATVLESSLPPGVVQTRFDLAGSHDDIWRKPEGIT.

Residues 47–51 (HGGGW) carry the HGGXW motif. Serine 130 functions as the Nucleophile in the catalytic mechanism.

It belongs to the kynurenine formamidase family.

It carries out the reaction N-formyl-L-kynurenine + H2O = L-kynurenine + formate + H(+). It participates in secondary metabolite metabolism. Its function is as follows. Kynurenine formamidase; part of the cluster that mediates the biosynthesis of a highly modified cyclo-arginine-tryptophan dipeptide (cRW). Within the pathway, avaC catalyzes the deformylation of the cyclo-Arg-formylkynurenine iketopiperazine (DKP), produced by the FAD-dependent monooxygenase avaB. The first step of the pathway is perfornmed by the arginine-containing cyclodipeptide synthase (RCPDS) avaA that acts as the scaffold-generating enzyme and is responsible for formation of the cyclo-Arg-Trp (cRW) diketopiperazine. AvaB then acts as a multifunctional flavoenzyme that is responsible for generating the cyclo-Arg-formylkynurenine DKP, which can be deformylated by avaC. AvaB then further catalyzes an additional N-oxidation followed by cyclization and dehydration. The next step is an N-acetylation of the guanidine group catalyzed by the arginine N-acetyltransferase avaD. The roles of the additional enzymes identified within the ava cluster still have to be determined. This chain is Kynurenine formamidase avaC, found in Aspergillus versicolor.